The sequence spans 396 residues: Elongation factor Tu (396 aa).

The tr-type G domain maps to 10–206 (KPHVNVGTIG…ALDTYIPTPE (197 aa)). Residues 19–26 (GHVDHGKT) are G1. 19–26 (GHVDHGKT) serves as a coordination point for GTP. T26 is a binding site for Mg(2+). The tract at residues 60–64 (GITIN) is G2. The G3 stretch occupies residues 81–84 (DCPG). Residues 81–85 (DCPGH) and 136–139 (NKAD) each bind GTP. Positions 136-139 (NKAD) are G4. A G5 region spans residues 174–176 (SAK).

This sequence belongs to the TRAFAC class translation factor GTPase superfamily. Classic translation factor GTPase family. EF-Tu/EF-1A subfamily. As to quaternary structure, monomer.

Its subcellular location is the cytoplasm. It catalyses the reaction GTP + H2O = GDP + phosphate + H(+). In terms of biological role, GTP hydrolase that promotes the GTP-dependent binding of aminoacyl-tRNA to the A-site of ribosomes during protein biosynthesis. The polypeptide is Elongation factor Tu (Bordetella avium (strain 197N)).